Here is a 1139-residue protein sequence, read N- to C-terminus: Liprin-alpha (1139 aa).

Coiled-coil stretches lie at residues 30 to 144, 172 to 298, 329 to 517, and 655 to 701; these read PSDR…SLRM, EHHK…KNQI, IRDL…AQFQ, and QDAQ…EFYD. Disordered regions lie at residues 700–720 and 764–847; these read YDDQ…LDNM and NQFD…DRRK. Polar residues-rich tracts occupy residues 704-719 and 778-787; these read GIST…QLDN and PASSVASSTD. SAM domains are found at residues 867-933, 952-1016, and 1040-1109; these read WNGP…MVSL, NHEY…LKKV, and WSNE…LVND.

The protein belongs to the liprin family. Liprin-alpha subfamily. As to expression, detected in vulval muscle and other cells near the vulva; in neurons located in the lateral ganglion, posterior ganglion, ventral cord and lateral body; and in pharyngeal and body wall muscle cells.

The protein resides in the synapse. May play a role in regulating the structure of the neuronal region, called the active zone, from which synaptic vesicles send neurotransmitter signals across the synapse. This may be in association with the liprin-beta protein hlb-1. This chain is Liprin-alpha, found in Caenorhabditis elegans.